The chain runs to 429 residues: Enolase (429 aa).

A (2R)-2-phosphoglycerate-binding site is contributed by Gln-167. The Proton donor role is filled by Glu-209. Mg(2+) is bound by residues Asp-246, Glu-289, and Asp-316. Residues Lys-341, Arg-370, Ser-371, and Lys-392 each coordinate (2R)-2-phosphoglycerate. Residue Lys-341 is the Proton acceptor of the active site.

The protein belongs to the enolase family. As to quaternary structure, component of the RNA degradosome, a multiprotein complex involved in RNA processing and mRNA degradation. Requires Mg(2+) as cofactor.

It is found in the cytoplasm. It localises to the secreted. The protein localises to the cell surface. It catalyses the reaction (2R)-2-phosphoglycerate = phosphoenolpyruvate + H2O. It participates in carbohydrate degradation; glycolysis; pyruvate from D-glyceraldehyde 3-phosphate: step 4/5. In terms of biological role, catalyzes the reversible conversion of 2-phosphoglycerate (2-PG) into phosphoenolpyruvate (PEP). It is essential for the degradation of carbohydrates via glycolysis. The polypeptide is Enolase (Cellvibrio japonicus (strain Ueda107) (Pseudomonas fluorescens subsp. cellulosa)).